We begin with the raw amino-acid sequence, 186 residues long: Elongation factor P (186 aa).

The protein belongs to the elongation factor P family.

It localises to the cytoplasm. The protein operates within protein biosynthesis; polypeptide chain elongation. Functionally, involved in peptide bond synthesis. Stimulates efficient translation and peptide-bond synthesis on native or reconstituted 70S ribosomes in vitro. Probably functions indirectly by altering the affinity of the ribosome for aminoacyl-tRNA, thus increasing their reactivity as acceptors for peptidyl transferase. The sequence is that of Elongation factor P from Ruminiclostridium cellulolyticum (strain ATCC 35319 / DSM 5812 / JCM 6584 / H10) (Clostridium cellulolyticum).